The primary structure comprises 282 residues: MVKHCIDQFCVFGNPINHTQSPYIHSLFSKQTGIVYEYSARLVPFKEFNSYVLNFFLNKGKGANITVPFKENAYVISNNLTIRAKMSRAVNTFKKLHNNKILGDNTDGIGVLHDLKRIKFIKSKFNRVLLIGAGGAARGIIFSLLSYGCSIVVLNRTITRALQLVEDFKNVGSISIFKEKFASNYSFNLIINATTINICQNSNLSTIKSLIHKDVYCYDINYSIKHKYTEFLLWCIKNGAICVSNGIGMLVSQAAHSFYLWYGILPETNSIICKLNRQFYML.

Shikimate contacts are provided by residues 19–21 and T66; that span reads TQS. The active-site Proton acceptor is K70. 2 residues coordinate shikimate: N91 and D107. Residues 132-136, 155-160, I224, and G246 contribute to the NADP(+) site; these read GAGGA and NRTITR.

The protein belongs to the shikimate dehydrogenase family. As to quaternary structure, homodimer.

The catalysed reaction is shikimate + NADP(+) = 3-dehydroshikimate + NADPH + H(+). The protein operates within metabolic intermediate biosynthesis; chorismate biosynthesis; chorismate from D-erythrose 4-phosphate and phosphoenolpyruvate: step 4/7. Its function is as follows. Involved in the biosynthesis of the chorismate, which leads to the biosynthesis of aromatic amino acids. Catalyzes the reversible NADPH linked reduction of 3-dehydroshikimate (DHSA) to yield shikimate (SA). The chain is Shikimate dehydrogenase (NADP(+)) from Buchnera aphidicola subsp. Baizongia pistaciae (strain Bp).